Reading from the N-terminus, the 118-residue chain is Large ribosomal subunit protein uL18 (118 aa).

Belongs to the universal ribosomal protein uL18 family. As to quaternary structure, part of the 50S ribosomal subunit; part of the 5S rRNA/L5/L18/L25 subcomplex. Contacts the 5S and 23S rRNAs.

Its function is as follows. This is one of the proteins that bind and probably mediate the attachment of the 5S RNA into the large ribosomal subunit, where it forms part of the central protuberance. This Helicobacter hepaticus (strain ATCC 51449 / 3B1) protein is Large ribosomal subunit protein uL18.